Here is a 145-residue protein sequence, read N- to C-terminus: Maximins 3/H3 type 2 (145 aa).

Positions 1 to 18 (MNFKYIVAVSFLIASAYA) are cleaved as a signal peptide. 2 propeptides span residues 19-43 (RSVQ…LREI) and 74-124 (RTAE…KEKR). Ile-144 carries the isoleucine amide modification.

This sequence belongs to the bombinin family. In terms of tissue distribution, expressed by the skin glands.

Its subcellular location is the secreted. Its function is as follows. Maximin-3 shows antibacterial activity against both Gram-positive and Gram-negative bacteria. It also shows antimicrobial activity against the fungus C.albicans, but not against A.flavus nor P.uticale. It has little hemolytic activity. It possess a significant cytotoxicity against tumor cell lines. It possess a significant anti-HIV activity. It shows high spermicidal activity. In terms of biological role, maximin-H3 shows antibacterial activity against both Gram-positive and Gram-negative bacteria. It also shows antimicrobial activity against the fungus C.albicans. Shows strong hemolytic activity. This is Maximins 3/H3 type 2 from Bombina maxima (Giant fire-bellied toad).